The sequence spans 151 residues: Probable cGMP 3',5'-cyclic phosphodiesterase subunit delta (151 aa).

Belongs to the PDE6D/unc-119 family. In terms of assembly, interacts with Pde6.

The protein localises to the nucleus. It is found in the cytoplasm. This Drosophila grimshawi (Hawaiian fruit fly) protein is Probable cGMP 3',5'-cyclic phosphodiesterase subunit delta.